A 61-amino-acid chain; its full sequence is MSIFRSLTSLSNFNVNKNYNNNNNNNNINNIASTKISQESNQTSYLIFAPLKRSFTYSCYI.

This is an uncharacterized protein from Dictyostelium discoideum (Social amoeba).